The chain runs to 535 residues: Palmdelphin (535 aa).

A coiled-coil region spans residues 1–105 (MEEAELLKER…KEELQVSTKE (105 aa)). A disordered region spans residues 423–450 (VVIDDDDDDDDDEEADKKGEENTKESVS). Positions 424 to 436 (VIDDDDDDDDDEE) are enriched in acidic residues. The segment covering 437–446 (ADKKGEENTK) has biased composition (basic and acidic residues).

It belongs to the paralemmin family.

The protein resides in the cytoplasm. It is found in the cell projection. It localises to the dendrite. Its subcellular location is the dendritic spine. The sequence is that of Palmdelphin (palmd) from Xenopus laevis (African clawed frog).